The primary structure comprises 75 residues: Calhepatin (75 aa).

Ser1 carries the N-acetylserine modification. 2 consecutive EF-hand domains span residues 2–37 (ADEQKLRERFEALDKDKSGTLSVDELYEGVHAVHPK) and 38–73 (VSRNDIVKIIEKVDTNKDGQVSWQEFIEAFKRLADL). Residues Asp15, Asp17, Ser19, Thr21, Glu26, Asp51, Asn53, Asp55, Gln57, and Glu62 each coordinate Ca(2+).

In terms of assembly, monomer and homodimer. Liver, and to a much lower level intestine.

Its function is as follows. Binds both calcium and copper, but not zinc. May be involved in calcium signal transduction. The protein is Calhepatin of Lepidosiren paradoxus (South American lungfish).